Here is a 517-residue protein sequence, read N- to C-terminus: Acetylcholine receptor subunit delta (517 aa).

Positions 1–21 (MEGPVLTLGLLAALAVCGSWG) are cleaved as a signal peptide. The Extracellular portion of the chain corresponds to 22-245 (LNEEERLIRH…ITFYLIIRRK (224 aa)). N-linked (GlcNAc...) asparagine glycans are attached at residues Asn-97 and Asn-164. Cysteines 151 and 165 form a disulfide. The next 3 membrane-spanning stretches (helical) occupy residues 246–270 (PLFYIINILVPCVLISFMVNLVFYL), 278–299 (TSVAISVLLAQSVFLLLISKRL), and 312–333 (FLLFGMVLVTMVVVICVIVLNI). Topologically, residues 334-471 (HFRTPSTHVL…WNRVARTVDR (138 aa)) are cytoplasmic. Position 390 is a phosphotyrosine; by Tyr-kinases (Tyr-390). Residues 472-490 (LCLFVVTPVMVVGTAWIFL) form a helical membrane-spanning segment.

It belongs to the ligand-gated ion channel (TC 1.A.9) family. Acetylcholine receptor (TC 1.A.9.1) subfamily. Delta/CHRND sub-subfamily. Pentamer of two alpha chains, and one each of the beta, delta, and gamma (in immature muscle) or epsilon (in mature muscle) chains. The muscle heteropentamer composed of alpha-1, beta-1, delta, epsilon subunits interacts with the alpha-conotoxin ImII.

The protein resides in the postsynaptic cell membrane. The protein localises to the cell membrane. The catalysed reaction is K(+)(in) = K(+)(out). The enzyme catalyses Na(+)(in) = Na(+)(out). After binding acetylcholine, the AChR responds by an extensive change in conformation that affects all subunits and leads to opening of an ion-conducting channel across the plasma membrane. This chain is Acetylcholine receptor subunit delta, found in Homo sapiens (Human).